Consider the following 153-residue polypeptide: MNANPCEVCRFQNKQCVNNCMFALLFPSSDLEKFDVVNRIFGLETLTFYLKDLSPMERIDTTRTLYYEAKPCFLNPPKNPSKFLEALLNYPYQKAEEVSKTKKLLASYSRPCVVLALPAPKYTQSKSKPSVLRKRKRKTKSSDESAIRVVEDS.

In terms of domain architecture, LOB spans 4–105; that stretch reads NPCEVCRFQN…EEVSKTKKLL (102 aa). A disordered region spans residues 126–153; the sequence is KSKPSVLRKRKRKTKSSDESAIRVVEDS. The segment covering 140 to 153 has biased composition (basic and acidic residues); the sequence is KSSDESAIRVVEDS.

This sequence belongs to the LOB domain-containing protein family.

This is LOB domain-containing protein 26 (LBD26) from Arabidopsis thaliana (Mouse-ear cress).